The following is a 364-amino-acid chain: DNA replication and repair protein RecF (364 aa).

Residue 30-37 (GDNAQGKT) coordinates ATP.

The protein belongs to the RecF family.

It localises to the cytoplasm. The RecF protein is involved in DNA metabolism; it is required for DNA replication and normal SOS inducibility. RecF binds preferentially to single-stranded, linear DNA. It also seems to bind ATP. The protein is DNA replication and repair protein RecF of Clostridium kluyveri (strain ATCC 8527 / DSM 555 / NBRC 12016 / NCIMB 10680 / K1).